The following is a 115-amino-acid chain: Small ribosomal subunit protein uS14m (115 aa).

Belongs to the universal ribosomal protein uS14 family. Component of the mitochondrial small ribosomal subunit (mt-SSU). Mature yeast 74S mitochondrial ribosomes consist of a small (37S) and a large (54S) subunit. The 37S small subunit contains a 15S ribosomal RNA (15S mt-rRNA) and 34 different proteins. The 54S large subunit contains a 21S rRNA (21S mt-rRNA) and 46 different proteins.

It localises to the mitochondrion. In terms of biological role, component of the mitochondrial ribosome (mitoribosome), a dedicated translation machinery responsible for the synthesis of mitochondrial genome-encoded proteins, including at least some of the essential transmembrane subunits of the mitochondrial respiratory chain. The mitoribosomes are attached to the mitochondrial inner membrane and translation products are cotranslationally integrated into the membrane. The chain is Small ribosomal subunit protein uS14m (MRP2) from Saccharomyces cerevisiae (strain ATCC 204508 / S288c) (Baker's yeast).